The sequence spans 504 residues: ATP synthase subunit alpha (504 aa).

170 to 177 (GDRQTGKT) is a binding site for ATP.

This sequence belongs to the ATPase alpha/beta chains family. In terms of assembly, F-type ATPases have 2 components, CF(1) - the catalytic core - and CF(0) - the membrane proton channel. CF(1) has five subunits: alpha(3), beta(3), gamma(1), delta(1), epsilon(1). CF(0) has three main subunits: a(1), b(2) and c(9-12). The alpha and beta chains form an alternating ring which encloses part of the gamma chain. CF(1) is attached to CF(0) by a central stalk formed by the gamma and epsilon chains, while a peripheral stalk is formed by the delta and b chains.

It localises to the cell membrane. The enzyme catalyses ATP + H2O + 4 H(+)(in) = ADP + phosphate + 5 H(+)(out). Functionally, produces ATP from ADP in the presence of a proton gradient across the membrane. The alpha chain is a regulatory subunit. The polypeptide is ATP synthase subunit alpha (Shouchella clausii (strain KSM-K16) (Alkalihalobacillus clausii)).